The sequence spans 300 residues: ETS homologous factor (300 aa).

One can recognise a PNT domain in the interval 29 to 115; that stretch reads PTCNVSSGFF…SNLQHLKWNG (87 aa). A disordered region spans residues 181-203; it reads VAESPDMKKEQDHPVKSHTKKHN. Residues 185 to 195 show a composition bias toward basic and acidic residues; it reads PDMKKEQDHPV. The ETS DNA-binding region spans 207–289; sequence THLWEFIRDI…DGRRLVYKFG (83 aa).

Belongs to the ETS family. In terms of tissue distribution, highly expressed in kidney and lung, weakly in skeletal muscle, heart, and liver, and not detected in brain, spleen or testis.

It localises to the nucleus. Functionally, transcriptional activator that may play a role in regulating epithelial cell differentiation and proliferation. May act as a repressor for a specific subset of ETS/AP-1-responsive genes, and as a modulator of the nuclear response to mitogen-activated protein kinase signaling cascades. Binds to DNA sequences containing the consensus nucleotide core sequence GGAA. Involved in regulation of TNFRSF10B/DR5 expression through Ets-binding sequences on the TNFRSF10B/DR5 promoter. In Mus musculus (Mouse), this protein is ETS homologous factor.